The sequence spans 62 residues: MDASRASQLINSRETDVYCKSEPVIIRSVDEYSKMATVESLNNGTTIMAPLNDIRDSGVINH.

The protein belongs to the SspH family.

It is found in the spore core. The sequence is that of Small, acid-soluble spore protein H 1 from Clostridium botulinum (strain ATCC 19397 / Type A).